Consider the following 95-residue polypeptide: Glutamyl-tRNA(Gln) amidotransferase subunit C (95 aa).

It belongs to the GatC family. In terms of assembly, heterotrimer of A, B and C subunits.

It catalyses the reaction L-glutamyl-tRNA(Gln) + L-glutamine + ATP + H2O = L-glutaminyl-tRNA(Gln) + L-glutamate + ADP + phosphate + H(+). It carries out the reaction L-aspartyl-tRNA(Asn) + L-glutamine + ATP + H2O = L-asparaginyl-tRNA(Asn) + L-glutamate + ADP + phosphate + 2 H(+). Functionally, allows the formation of correctly charged Asn-tRNA(Asn) or Gln-tRNA(Gln) through the transamidation of misacylated Asp-tRNA(Asn) or Glu-tRNA(Gln) in organisms which lack either or both of asparaginyl-tRNA or glutaminyl-tRNA synthetases. The reaction takes place in the presence of glutamine and ATP through an activated phospho-Asp-tRNA(Asn) or phospho-Glu-tRNA(Gln). The polypeptide is Glutamyl-tRNA(Gln) amidotransferase subunit C (Rhizobium meliloti (strain 1021) (Ensifer meliloti)).